A 180-amino-acid chain; its full sequence is MSKVEAQIEKIFTSFDKDGDGNLSWDEVFSRMSSNSNIKDPLAATKSMFDHYNRDADTENLSIQEIREVLMSKKIKQDLIRTEKALRSKVKDFRKKYDTDNDGVVTFDEMYQLYLKDPDFDEEDDELSAEEREKAKCRRAKSSCRYFFSAVDKDKNDKLSYLEIHEYLKKHPEFDLGPSQ.

4 EF-hand domains span residues 3-38 (KVEA…NSNI), 40-76 (DPLA…KKIK), 85-120 (ALRS…DPDF), and 139-174 (RAKS…HPEF). Asp-16, Asp-18, Asp-20, Asn-22, and Glu-27 together coordinate Ca(2+). Positions 98, 100, 102, 109, 152, 154, 156, 158, and 163 each coordinate Ca(2+).

This chain is Calcium-binding protein E (cbpE), found in Dictyostelium discoideum (Social amoeba).